Consider the following 100-residue polypeptide: Large ribosomal subunit protein uL23 (100 aa).

The protein belongs to the universal ribosomal protein uL23 family. Part of the 50S ribosomal subunit. Contacts protein L29, and trigger factor when it is bound to the ribosome.

One of the early assembly proteins it binds 23S rRNA. One of the proteins that surrounds the polypeptide exit tunnel on the outside of the ribosome. Forms the main docking site for trigger factor binding to the ribosome. The protein is Large ribosomal subunit protein uL23 of Novosphingobium aromaticivorans (strain ATCC 700278 / DSM 12444 / CCUG 56034 / CIP 105152 / NBRC 16084 / F199).